The primary structure comprises 190 residues: MANYSTNEFKSGLKIMLDGDPCSIIENEFVKPGKGQAFNRVKFRNLKSGRVGERTFKSGDSVEGADVVDLDMEYLYTDGEFYHFMLTDGSFEQHAADVSAVGDTTKWLKEQDVYTVTLYNGAPLSVSPPNFVELEIVETDPGVRGDTAQGGSKPAKLTTGAVVAVPLFINQGEMIKVDTRSGEYVSRVKS.

Residue Lys-34 is modified to N6-(3,6-diaminohexanoyl)-5-hydroxylysine.

It belongs to the elongation factor P family. In terms of processing, may be beta-lysylated on the epsilon-amino group of Lys-34 by the combined action of EpmA and EpmB, and then hydroxylated on the C5 position of the same residue by EpmC (if this protein is present). Lysylation is critical for the stimulatory effect of EF-P on peptide-bond formation. The lysylation moiety may extend toward the peptidyltransferase center and stabilize the terminal 3-CCA end of the tRNA. Hydroxylation of the C5 position on Lys-34 may allow additional potential stabilizing hydrogen-bond interactions with the P-tRNA.

It is found in the cytoplasm. Its pathway is protein biosynthesis; polypeptide chain elongation. Functionally, involved in peptide bond synthesis. Alleviates ribosome stalling that occurs when 3 or more consecutive Pro residues or the sequence PPG is present in a protein, possibly by augmenting the peptidyl transferase activity of the ribosome. Modification of Lys-34 is required for alleviation. The chain is Elongation factor P from Hahella chejuensis (strain KCTC 2396).